A 289-amino-acid chain; its full sequence is tRNA dimethylallyltransferase (289 aa).

ATP is bound at residue glycine 9–threonine 16. Threonine 11–threonine 16 serves as a coordination point for substrate. Positions aspartate 34–cysteine 37 are interaction with substrate tRNA.

This sequence belongs to the IPP transferase family. Monomer. Mg(2+) serves as cofactor.

The enzyme catalyses adenosine(37) in tRNA + dimethylallyl diphosphate = N(6)-dimethylallyladenosine(37) in tRNA + diphosphate. Catalyzes the transfer of a dimethylallyl group onto the adenine at position 37 in tRNAs that read codons beginning with uridine, leading to the formation of N6-(dimethylallyl)adenosine (i(6)A). The sequence is that of tRNA dimethylallyltransferase from Campylobacter jejuni (strain RM1221).